A 323-amino-acid polypeptide reads, in one-letter code: Beta-ketoacyl-[acyl-carrier-protein] synthase III (323 aa).

Residues cysteine 113 and histidine 250 contribute to the active site. Residues 251–255 (QANKR) are ACP-binding. Asparagine 280 is a catalytic residue.

It belongs to the thiolase-like superfamily. FabH family. In terms of assembly, homodimer.

It is found in the cytoplasm. It catalyses the reaction malonyl-[ACP] + acetyl-CoA + H(+) = 3-oxobutanoyl-[ACP] + CO2 + CoA. The protein operates within lipid metabolism; fatty acid biosynthesis. Its function is as follows. Catalyzes the condensation reaction of fatty acid synthesis by the addition to an acyl acceptor of two carbons from malonyl-ACP. Catalyzes the first condensation reaction which initiates fatty acid synthesis and may therefore play a role in governing the total rate of fatty acid production. Possesses both acetoacetyl-ACP synthase and acetyl transacylase activities. Its substrate specificity determines the biosynthesis of branched-chain and/or straight-chain of fatty acids. This chain is Beta-ketoacyl-[acyl-carrier-protein] synthase III, found in Brucella anthropi (strain ATCC 49188 / DSM 6882 / CCUG 24695 / JCM 21032 / LMG 3331 / NBRC 15819 / NCTC 12168 / Alc 37) (Ochrobactrum anthropi).